The sequence spans 322 residues: Cytochrome f (322 aa).

The signal sequence occupies residues M1–S35. Heme contacts are provided by Y38, C58, C61, and H62. A helical membrane pass occupies residues V288–K308.

It belongs to the cytochrome f family. As to quaternary structure, the 4 large subunits of the cytochrome b6-f complex are cytochrome b6, subunit IV (17 kDa polypeptide, petD), cytochrome f and the Rieske protein, while the 4 small subunits are PetG, PetL, PetM and PetN. The complex functions as a dimer. It depends on heme as a cofactor.

Its subcellular location is the plastid. The protein localises to the chloroplast thylakoid membrane. Its function is as follows. Component of the cytochrome b6-f complex, which mediates electron transfer between photosystem II (PSII) and photosystem I (PSI), cyclic electron flow around PSI, and state transitions. The sequence is that of Cytochrome f from Aethionema grandiflorum (Persian stone-cress).